Here is a 300-residue protein sequence, read N- to C-terminus: 7-methylguanosine phosphate-specific 5'-nucleotidase (300 aa).

Aspartate 41 acts as the Nucleophile in catalysis. Mg(2+) contacts are provided by aspartate 41 and aspartate 43. Residue aspartate 43 is the Proton donor of the active site. A CMP-binding site is contributed by glutamate 88. Glutamate 88 contacts N(7)-methyl-GMP. Residues 156 to 157 (SA) and lysine 205 each bind substrate. Aspartate 230 contacts Mg(2+). Residue lysine 256 is modified to N6-acetyllysine.

Belongs to the pyrimidine 5'-nucleotidase family. Monomer.

The protein resides in the cytoplasm. It catalyses the reaction N(7)-methyl-GMP + H2O = N(7)-methylguanosine + phosphate. The catalysed reaction is CMP + H2O = cytidine + phosphate. It carries out the reaction a ribonucleoside 5'-phosphate + H2O = a ribonucleoside + phosphate. Its function is as follows. Specifically hydrolyzes 7-methylguanosine monophosphate (m(7)GMP) to 7-methylguanosine and inorganic phosphate. The specific activity for m(7)GMP may protect cells against undesired salvage of m(7)GMP and its incorporation into nucleic acids. Also has weak activity for CMP. UMP and purine nucleotides are poor substrates. This is 7-methylguanosine phosphate-specific 5'-nucleotidase (Nt5c3b) from Mus musculus (Mouse).